The sequence spans 98 residues: NADH-ubiquinone oxidoreductase chain 4L (98 aa).

Transmembrane regions (helical) follow at residues 1-21, 29-49, and 59-79; these read MTPV…GLAF, ALLC…LWAL, and APML…ALLV.

The protein belongs to the complex I subunit 4L family.

Its subcellular location is the mitochondrion membrane. It carries out the reaction a ubiquinone + NADH + 5 H(+)(in) = a ubiquinol + NAD(+) + 4 H(+)(out). Core subunit of the mitochondrial membrane respiratory chain NADH dehydrogenase (Complex I) which catalyzes electron transfer from NADH through the respiratory chain, using ubiquinone as an electron acceptor. Part of the enzyme membrane arm which is embedded in the lipid bilayer and involved in proton translocation. This chain is NADH-ubiquinone oxidoreductase chain 4L (MT-ND4L), found in Carassius auratus (Goldfish).